Reading from the N-terminus, the 947-residue chain is Translation initiation factor IF-2 (947 aa).

A disordered region spans residues 69-353; the sequence is RRRKEVPQEE…TPKPQKKTEV (285 aa). Over residues 81 to 108 the composition is skewed to low complexity; it reads APPAAAEEPSSVDTAVAEEAPAEEVQPV. Residues 139-155 show a composition bias toward acidic residues; sequence PVVEEVIAEPAVEEVVE. Basic and acidic residues-rich tracts occupy residues 215 to 226 and 246 to 262; these read VTKEKPKVEKAT and KRQE…ERPK. A compositionally biased stretch (low complexity) spans 264 to 284; that stretch reads AKPSGGPAPRAKEAAPQAAVP. Residues 327 to 337 show a composition bias toward basic and acidic residues; it reads QVYEPERDERR. The segment covering 338-348 has biased composition (basic residues); sequence MRRGKKTPKPQ. Positions 447-616 constitute a tr-type G domain; it reads PRPPVVTIMG…LLQAEVLELK (170 aa). The tract at residues 456-463 is G1; sequence GHVDHGKT. 456–463 provides a ligand contact to GTP; sequence GHVDHGKT. Residues 481–485 form a G2 region; the sequence is GITQH. Positions 502–505 are G3; it reads DTPG. GTP is bound by residues 502 to 506 and 556 to 559; these read DTPGH and NKMD. Residues 556–559 form a G4 region; sequence NKMD. Residues 592-594 are G5; the sequence is SAK.

Belongs to the TRAFAC class translation factor GTPase superfamily. Classic translation factor GTPase family. IF-2 subfamily.

Its subcellular location is the cytoplasm. Functionally, one of the essential components for the initiation of protein synthesis. Protects formylmethionyl-tRNA from spontaneous hydrolysis and promotes its binding to the 30S ribosomal subunits. Also involved in the hydrolysis of GTP during the formation of the 70S ribosomal complex. This Syntrophotalea carbinolica (strain DSM 2380 / NBRC 103641 / GraBd1) (Pelobacter carbinolicus) protein is Translation initiation factor IF-2.